The primary structure comprises 200 residues: Glycerol-3-phosphate acyltransferase (200 aa).

5 helical membrane passes run 1–21 (MITV…FAVV), 51–71 (VAAA…VVVA), 84–104 (VIAS…FLAF), 116–136 (ILLG…IIVA), and 159–179 (FLLQ…LLIL).

It belongs to the PlsY family. As to quaternary structure, probably interacts with PlsX.

It is found in the cell inner membrane. It catalyses the reaction an acyl phosphate + sn-glycerol 3-phosphate = a 1-acyl-sn-glycero-3-phosphate + phosphate. Its pathway is lipid metabolism; phospholipid metabolism. Catalyzes the transfer of an acyl group from acyl-phosphate (acyl-PO(4)) to glycerol-3-phosphate (G3P) to form lysophosphatidic acid (LPA). This enzyme utilizes acyl-phosphate as fatty acyl donor, but not acyl-CoA or acyl-ACP. This is Glycerol-3-phosphate acyltransferase from Nitrosomonas eutropha (strain DSM 101675 / C91 / Nm57).